The sequence spans 213 residues: Mite allergen Der f 7 (213 aa).

The signal sequence occupies residues 1–17 (MMKFLLIAAVAFVAVSA). Asn151 carries N-linked (GlcNAc...) asparagine glycosylation.

Belongs to the mite group 7 allergen family.

It localises to the secreted. This chain is Mite allergen Der f 7 (DERF7), found in Dermatophagoides farinae (American house dust mite).